A 226-amino-acid chain; its full sequence is Histidine biosynthesis bifunctional protein HisIE (226 aa).

Positions 1-131 (MMPMNQEFIQ…STFNRPLSNT (131 aa)) are phosphoribosyl-AMP cyclohydrolase. The phosphoribosyl-ATP pyrophosphohydrolase stretch occupies residues 132–226 (CSELFEVIKD…KRRQSKSNPK (95 aa)).

This sequence in the N-terminal section; belongs to the PRA-CH family. It in the C-terminal section; belongs to the PRA-PH family.

It is found in the cytoplasm. It catalyses the reaction 1-(5-phospho-beta-D-ribosyl)-ATP + H2O = 1-(5-phospho-beta-D-ribosyl)-5'-AMP + diphosphate + H(+). The enzyme catalyses 1-(5-phospho-beta-D-ribosyl)-5'-AMP + H2O = 1-(5-phospho-beta-D-ribosyl)-5-[(5-phospho-beta-D-ribosylamino)methylideneamino]imidazole-4-carboxamide. Its pathway is amino-acid biosynthesis; L-histidine biosynthesis; L-histidine from 5-phospho-alpha-D-ribose 1-diphosphate: step 2/9. The protein operates within amino-acid biosynthesis; L-histidine biosynthesis; L-histidine from 5-phospho-alpha-D-ribose 1-diphosphate: step 3/9. The chain is Histidine biosynthesis bifunctional protein HisIE from Prochlorococcus marinus (strain SARG / CCMP1375 / SS120).